The chain runs to 612 residues: Protein MUK1 (612 aa).

Over residues 40–50 (EDQNDNERSSC) the composition is skewed to basic and acidic residues. The disordered stretch occupies residues 40 to 66 (EDQNDNERSSCDGDENSTTGERLENNK). Positions 55–66 (NSTTGERLENNK) are enriched in polar residues. Phosphoserine occurs at positions 67, 163, 185, and 245. The VPS9 domain maps to 273-414 (TEYNKLLNEK…VEGLTKNDFS (142 aa)). The tract at residues 494–560 (IRSYTPPHPN…SSASLEHGNR (67 aa)) is disordered. A compositionally biased stretch (low complexity) spans 503-517 (NNTSNNNLHSSNNLN). A compositionally biased stretch (polar residues) spans 518 to 529 (IPRSSSQLSMEL). The span at 530–542 (SNRDTTEMSRDGS) shows a compositional bias: basic and acidic residues. A compositionally biased stretch (low complexity) spans 543–554 (RSTSSSSRSSAS).

The protein localises to the cytoplasm. Functionally, putative GTPase-activating protein. This is Protein MUK1 (MUK1) from Saccharomyces cerevisiae (strain ATCC 204508 / S288c) (Baker's yeast).